Reading from the N-terminus, the 126-residue chain is Spermidine export protein MdtJ (126 aa).

4 consecutive transmembrane segments (helical) span residues 1–21 (MIYW…TLSM), 30–50 (ITGH…LSLA), 54–74 (VALG…ITLF), and 81–101 (EPFS…IVML).

Belongs to the drug/metabolite transporter (DMT) superfamily. Small multidrug resistance (SMR) (TC 2.A.7.1) family. MdtJ subfamily. Forms a complex with MdtI.

It is found in the cell inner membrane. Catalyzes the excretion of spermidine. This Sodalis glossinidius (strain morsitans) protein is Spermidine export protein MdtJ.